A 30-amino-acid chain; its full sequence is Circulin A (30 aa).

Positions 1 to 30 (GIPCGESCVWIPCISAALGCSCKNKVCYRN) form a cross-link, cyclopeptide (Gly-Asn). 3 disulfide bridges follow: Cys4-Cys20, Cys8-Cys22, and Cys13-Cys27.

Post-translationally, this is a cyclic peptide. As to expression, expressed in fruit, pedicel, root and stem but not in leaf (at protein level).

In terms of biological role, probably participates in a plant defense mechanism. The sequence is that of Circulin A from Chassalia chartacea (Chassalia curviflora).